We begin with the raw amino-acid sequence, 199 residues long: NADH-quinone oxidoreductase subunit B 2 (199 aa).

4 residues coordinate [4Fe-4S] cluster: cysteine 78, cysteine 79, cysteine 143, and cysteine 173.

It belongs to the complex I 20 kDa subunit family. NDH-1 is composed of 14 different subunits. Subunits NuoB, C, D, E, F, and G constitute the peripheral sector of the complex. It depends on [4Fe-4S] cluster as a cofactor.

It localises to the cell inner membrane. It carries out the reaction a quinone + NADH + 5 H(+)(in) = a quinol + NAD(+) + 4 H(+)(out). NDH-1 shuttles electrons from NADH, via FMN and iron-sulfur (Fe-S) centers, to quinones in the respiratory chain. The immediate electron acceptor for the enzyme in this species is believed to be ubiquinone. Couples the redox reaction to proton translocation (for every two electrons transferred, four hydrogen ions are translocated across the cytoplasmic membrane), and thus conserves the redox energy in a proton gradient. The chain is NADH-quinone oxidoreductase subunit B 2 from Rhodopseudomonas palustris (strain BisB5).